Here is an 83-residue protein sequence, read N- to C-terminus: Cytochrome b559 subunit alpha (83 aa).

The helical transmembrane segment at 21–35 threads the bilayer; it reads VIHSITIPSLFIAGW. Histidine 23 provides a ligand contact to heme.

Belongs to the PsbE/PsbF family. As to quaternary structure, heterodimer of an alpha subunit and a beta subunit. PSII is composed of 1 copy each of membrane proteins PsbA, PsbB, PsbC, PsbD, PsbE, PsbF, PsbH, PsbI, PsbJ, PsbK, PsbL, PsbM, PsbT, PsbX, PsbY, PsbZ, Psb30/Ycf12, at least 3 peripheral proteins of the oxygen-evolving complex and a large number of cofactors. It forms dimeric complexes. Heme b serves as cofactor.

The protein resides in the plastid. It localises to the chloroplast thylakoid membrane. Functionally, this b-type cytochrome is tightly associated with the reaction center of photosystem II (PSII). PSII is a light-driven water:plastoquinone oxidoreductase that uses light energy to abstract electrons from H(2)O, generating O(2) and a proton gradient subsequently used for ATP formation. It consists of a core antenna complex that captures photons, and an electron transfer chain that converts photonic excitation into a charge separation. The sequence is that of Cytochrome b559 subunit alpha from Amborella trichopoda.